A 251-amino-acid polypeptide reads, in one-letter code: Tyrosine phosphatase-like protein J3 (251 aa).

Positions 26–251 (IADEYYTIVP…PVLQNSKRRE (226 aa)) constitute a Tyrosine-protein phosphatase domain.

This sequence belongs to the protein-tyrosine phosphatase family.

This is Tyrosine phosphatase-like protein J3 (J4) from Microplitis demolitor (Parasitoid wasp).